Consider the following 325-residue polypeptide: uncharacterized protein (325 aa).

Residues 37-85 form a disordered region; it reads EKPTYTPAKPVKKAPSVVQPRRVSRTLRSSESVHTNHGPERVFESPTPA. Serine 52 is modified (phosphoserine). Positions 62–71 are enriched in polar residues; that stretch reads TLRSSESVHT. An FCP1 homology domain is found at 153–311; it reads EDEGKKCLIL…IDLIPFLEHL (159 aa).

This is an uncharacterized protein from Schizosaccharomyces pombe (strain 972 / ATCC 24843) (Fission yeast).